The chain runs to 164 residues: ATP synthase subunit b 2 (164 aa).

The helical transmembrane segment at 4-24 (TFWAFVGLVLFLALLVYFQIP) threads the bilayer.

Belongs to the ATPase B chain family. In terms of assembly, F-type ATPases have 2 components, F(1) - the catalytic core - and F(0) - the membrane proton channel. F(1) has five subunits: alpha(3), beta(3), gamma(1), delta(1), epsilon(1). F(0) has three main subunits: a(1), b(2) and c(10-14). The alpha and beta chains form an alternating ring which encloses part of the gamma chain. F(1) is attached to F(0) by a central stalk formed by the gamma and epsilon chains, while a peripheral stalk is formed by the delta and b chains.

It is found in the cell inner membrane. Its function is as follows. F(1)F(0) ATP synthase produces ATP from ADP in the presence of a proton or sodium gradient. F-type ATPases consist of two structural domains, F(1) containing the extramembraneous catalytic core and F(0) containing the membrane proton channel, linked together by a central stalk and a peripheral stalk. During catalysis, ATP synthesis in the catalytic domain of F(1) is coupled via a rotary mechanism of the central stalk subunits to proton translocation. In terms of biological role, component of the F(0) channel, it forms part of the peripheral stalk, linking F(1) to F(0). The sequence is that of ATP synthase subunit b 2 from Bartonella tribocorum (strain CIP 105476 / IBS 506).